The sequence spans 386 residues: Protein phosphatase methylesterase 1 (386 aa).

The segment at 1–38 is disordered; sequence MSALEKSMHLGRLPSRPPLPGSGGSQSGAKMRMGPGRK. Ser15 is modified (phosphoserine). Asymmetric dimethylarginine; alternate is present on Arg16. Arg16 is subject to Omega-N-methylarginine; alternate. A Phosphoserine modification is found at Ser42. Residue Ser156 is part of the active site. The segment covering 254-265 has biased composition (acidic residues); sequence IIEEEEEDEEGS. The segment at 254 to 280 is disordered; sequence IIEEEEEDEEGSESISKRKKEDDMETK. The segment covering 268–280 has biased composition (basic and acidic residues); it reads ISKRKKEDDMETK. His349 is an active-site residue.

The protein belongs to the AB hydrolase superfamily. Binds PPP2CA and PPP2CB. In terms of processing, phosphorylated by SIK1 following increases in intracellular sodium, leading to dissociation from the protein phosphatase 2A (PP2A) complex and subsequent dephosphorylation of sodium/potassium-transporting ATPase ATP1A1.

It catalyses the reaction [phosphatase 2A protein]-C-terminal L-leucine methyl ester + H2O = [phosphatase 2A protein]-C-terminal L-leucine + methanol + H(+). In terms of biological role, demethylates proteins that have been reversibly carboxymethylated. Demethylates PPP2CB (in vitro) and PPP2CA. Binding to PPP2CA displaces the manganese ion and inactivates the enzyme. This chain is Protein phosphatase methylesterase 1 (PPME1), found in Pongo abelii (Sumatran orangutan).